The following is a 159-amino-acid chain: Probable cyclic pyranopterin monophosphate synthase (159 aa).

Residues 75–77 and 111–112 each bind substrate; these read LCH and ME. The active site involves D126.

This sequence belongs to the MoaC family. In terms of assembly, homohexamer; trimer of dimers.

It carries out the reaction (8S)-3',8-cyclo-7,8-dihydroguanosine 5'-triphosphate = cyclic pyranopterin phosphate + diphosphate. It functions in the pathway cofactor biosynthesis; molybdopterin biosynthesis. Functionally, catalyzes the conversion of (8S)-3',8-cyclo-7,8-dihydroguanosine 5'-triphosphate to cyclic pyranopterin monophosphate (cPMP). In Pyrococcus abyssi (strain GE5 / Orsay), this protein is Probable cyclic pyranopterin monophosphate synthase.